Reading from the N-terminus, the 218-residue chain is Adenylate kinase (218 aa).

Position 12–17 (Gly-12–Thr-17) interacts with ATP. Residues Ser-32–Val-61 are NMP. AMP contacts are provided by residues Thr-33, Arg-38, Gln-59 to Val-61, Gly-87 to Arg-90, and Gln-94. Residues Gly-128–Asp-165 form an LID region. Position 129 (Arg-129) interacts with ATP. Residues Cys-132 and Cys-135 each contribute to the Zn(2+) site. Residue Ser-138 to Tyr-139 coordinates ATP. Residues Cys-152 and Cys-155 each coordinate Zn(2+). Residues Arg-162 and Arg-173 each coordinate AMP. Gln-201 lines the ATP pocket.

The protein belongs to the adenylate kinase family. As to quaternary structure, monomer.

Its subcellular location is the cytoplasm. It carries out the reaction AMP + ATP = 2 ADP. It functions in the pathway purine metabolism; AMP biosynthesis via salvage pathway; AMP from ADP: step 1/1. In terms of biological role, catalyzes the reversible transfer of the terminal phosphate group between ATP and AMP. Plays an important role in cellular energy homeostasis and in adenine nucleotide metabolism. This Clostridium perfringens (strain 13 / Type A) protein is Adenylate kinase.